Reading from the N-terminus, the 346-residue chain is MTRARIAVDAMGGDFAPEEIVKGALRAQEELQADVILVGDPDRLRAICQDHAPHLQVRIEAAEEAIAMEDAAVSVRSRPRASINVAMDLVKAGEADAVISAGHSGAVMASALLRLGRIRGIDRPAIGALLPTVIPGKPVLVLDVGANVDCKPRFLEQFAVMGSIYSRDVLGQANPRVGLVNIGEEDSKGNELALASHQLLRNNPRICFVGNAEGRDVLSGQFDVVVCDGFVGNVLLKFAEAVGSVFLEIIRDELPRGMRGKVGSTLLRRNLRRIKQRLDHAEHGGALLLGVNGICIISHGSSKAPSIYSAIRLAVEAAENRVIDHLHQIQEPPSPAADLVTEPVVS.

Belongs to the PlsX family. In terms of assembly, homodimer. Probably interacts with PlsY.

It localises to the cytoplasm. The enzyme catalyses a fatty acyl-[ACP] + phosphate = an acyl phosphate + holo-[ACP]. It participates in lipid metabolism; phospholipid metabolism. Functionally, catalyzes the reversible formation of acyl-phosphate (acyl-PO(4)) from acyl-[acyl-carrier-protein] (acyl-ACP). This enzyme utilizes acyl-ACP as fatty acyl donor, but not acyl-CoA. This is Phosphate acyltransferase from Synechococcus elongatus (strain ATCC 33912 / PCC 7942 / FACHB-805) (Anacystis nidulans R2).